We begin with the raw amino-acid sequence, 145 residues long: Probable D-aminoacyl-tRNA deacylase (145 aa).

This sequence belongs to the DTD family. Homodimer.

Its subcellular location is the cytoplasm. The catalysed reaction is glycyl-tRNA(Ala) + H2O = tRNA(Ala) + glycine + H(+). It carries out the reaction a D-aminoacyl-tRNA + H2O = a tRNA + a D-alpha-amino acid + H(+). Functionally, an aminoacyl-tRNA editing enzyme that deacylates mischarged D-aminoacyl-tRNAs. Also deacylates mischarged glycyl-tRNA(Ala), protecting cells against glycine mischarging by AlaRS. Acts via tRNA-based rather than protein-based catalysis; rejects L-amino acids rather than detecting D-amino acids in the active site. By recycling D-aminoacyl-tRNA to D-amino acids and free tRNA molecules, this enzyme counteracts the toxicity associated with the formation of D-aminoacyl-tRNA entities in vivo and helps enforce protein L-homochirality. The sequence is that of Probable D-aminoacyl-tRNA deacylase from Shigella flexneri serotype 5b (strain 8401).